Here is a 122-residue protein sequence, read N- to C-terminus: Large ribosomal subunit protein uL14 (122 aa).

The protein belongs to the universal ribosomal protein uL14 family. As to quaternary structure, part of the 50S ribosomal subunit. Forms a cluster with proteins L3 and L19. In the 70S ribosome, L14 and L19 interact and together make contacts with the 16S rRNA in bridges B5 and B8.

Functionally, binds to 23S rRNA. Forms part of two intersubunit bridges in the 70S ribosome. This is Large ribosomal subunit protein uL14 from Francisella philomiragia subsp. philomiragia (strain ATCC 25017 / CCUG 19701 / FSC 153 / O#319-036).